The sequence spans 469 residues: Glutamine synthetase (469 aa).

A GS beta-grasp domain is found at 16 to 100; that stretch reads EGVQYVDLRF…MICDIYDPVT (85 aa). In terms of domain architecture, GS catalytic spans 108–469; sequence TRYIAQKAEQ…PKEFELYWDI (362 aa). 2 residues coordinate Mg(2+): Glu133 and Glu135. Glu207 is a binding site for ATP. Residues Glu212 and Glu220 each coordinate Mg(2+). L-glutamate-binding positions include 264-265 and Gly265; that span reads NG. His269 serves as a coordination point for Mg(2+). ATP-binding positions include 271–273 and Ser273; that span reads HFS. The L-glutamate site is built by Arg321, Glu327, and Arg339. Residues Arg339, Arg344, and Lys353 each coordinate ATP. Glu358 is a binding site for Mg(2+). Residue Arg360 participates in L-glutamate binding. Tyr398 is modified (O-AMP-tyrosine).

This sequence belongs to the glutamine synthetase family. Oligomer of 12 subunits arranged in the form of two hexagons. Mg(2+) is required as a cofactor.

The protein localises to the cytoplasm. It catalyses the reaction L-glutamate + NH4(+) + ATP = L-glutamine + ADP + phosphate + H(+). With respect to regulation, the activity of this enzyme could be controlled by adenylation under conditions of abundant glutamine. Functionally, catalyzes the ATP-dependent biosynthesis of glutamine from glutamate and ammonia. This Aquifex aeolicus (strain VF5) protein is Glutamine synthetase.